Here is a 183-residue protein sequence, read N- to C-terminus: MTATAQQLEFLKNSIKSIQDYPKLGILFRDVTSLLEDPKAYALSIELLVERYKNAGITKVVGTEARGFLFGAPVALGLGVGFVPVRKPRKLPRETIAETYELEYSTDQLEIHVDAIKPGDNVLVVDDLLATGGTIEATVKLIRRLGGKVTDAAFIINLFDLGGEQRLEKQGITCYSLVPFPGH.

The protein belongs to the purine/pyrimidine phosphoribosyltransferase family. Homodimer.

It localises to the cytoplasm. The catalysed reaction is AMP + diphosphate = 5-phospho-alpha-D-ribose 1-diphosphate + adenine. The protein operates within purine metabolism; AMP biosynthesis via salvage pathway; AMP from adenine: step 1/1. Its function is as follows. Catalyzes a salvage reaction resulting in the formation of AMP, that is energically less costly than de novo synthesis. In Salmonella gallinarum (strain 287/91 / NCTC 13346), this protein is Adenine phosphoribosyltransferase.